Here is a 100-residue protein sequence, read N- to C-terminus: Integration host factor subunit alpha (100 aa).

A disordered region spans residues 50–70 (GNFQLRDKPQRPGRNPKTGEE).

The protein belongs to the bacterial histone-like protein family. Heterodimer of an alpha and a beta chain.

Its function is as follows. This protein is one of the two subunits of integration host factor, a specific DNA-binding protein that functions in genetic recombination as well as in transcriptional and translational control. The protein is Integration host factor subunit alpha of Chromobacterium violaceum (strain ATCC 12472 / DSM 30191 / JCM 1249 / CCUG 213 / NBRC 12614 / NCIMB 9131 / NCTC 9757 / MK).